A 913-amino-acid polypeptide reads, in one-letter code: Trafficking kinesin-binding protein 2 (913 aa).

Residues 11-21 (SQTGEENLMSS) show a composition bias toward polar residues. Positions 11–31 (SQTGEENLMSSNHRDSESITD) are disordered. Positions 48 to 353 (EEQLPQYKLR…QEEIKELRNK (306 aa)) constitute an HAP1 N-terminal domain. Residues 134–355 (QALLKRNHVL…EIKELRNKAG (222 aa)) adopt a coiled-coil conformation. The interaction with HGS stretch occupies residues 359-507 (HLCFSQAYGV…KQFFAEEWER (149 aa)). The disordered stretch occupies residues 442-478 (ESGVQQTEDKTLPNQGSSTEVPGNSHPRDPPGLPEDS). The span at 453–463 (LPNQGSSTEVP) shows a compositional bias: polar residues. A coiled-coil region spans residues 502–519 (AEEWERKLQILAEQEEEV). Composition is skewed to low complexity over residues 688–704 (SSGF…GSAS) and 780–789 (PSQSPCSSPV). Disordered regions lie at residues 688–707 (SSGF…SNTA) and 769–790 (ALAT…SPVP).

It belongs to the milton family. Interacts with RHOT1/Miro-1 and RHOT2/Miro-2. Interacts with GABA-A receptor and O-GlcNAc transferase. Interacts with HGS. Post-translationally, O-glycosylated. Present in heart and brain (at protein level).

It is found in the cytoplasm. It localises to the early endosome. The protein localises to the mitochondrion. Functionally, may regulate endosome-to-lysosome trafficking of membrane cargo, including EGFR. The chain is Trafficking kinesin-binding protein 2 (Trak2) from Rattus norvegicus (Rat).